A 495-amino-acid chain; its full sequence is Histidine--tRNA ligase (495 aa).

Belongs to the class-II aminoacyl-tRNA synthetase family. In terms of assembly, homodimer.

The protein localises to the cytoplasm. It carries out the reaction tRNA(His) + L-histidine + ATP = L-histidyl-tRNA(His) + AMP + diphosphate + H(+). In Ruegeria pomeroyi (strain ATCC 700808 / DSM 15171 / DSS-3) (Silicibacter pomeroyi), this protein is Histidine--tRNA ligase.